Here is a 715-residue protein sequence, read N- to C-terminus: Fatty acid oxidation complex subunit alpha (715 aa).

The enoyl-CoA hydratase stretch occupies residues 1-190; the sequence is MTTTSAFMLN…KAGLVDDVVP (190 aa). A 3-hydroxyacyl-CoA dehydrogenase region spans residues 306-714; sequence GPLNSVGILG…FWTNGETDQG (409 aa).

The protein in the N-terminal section; belongs to the enoyl-CoA hydratase/isomerase family. In the central section; belongs to the 3-hydroxyacyl-CoA dehydrogenase family. Heterotetramer of two alpha chains (FadJ) and two beta chains (FadI).

The protein resides in the cytoplasm. It catalyses the reaction a (3S)-3-hydroxyacyl-CoA = a (2E)-enoyl-CoA + H2O. It carries out the reaction a 4-saturated-(3S)-3-hydroxyacyl-CoA = a (3E)-enoyl-CoA + H2O. The enzyme catalyses a (3S)-3-hydroxyacyl-CoA + NAD(+) = a 3-oxoacyl-CoA + NADH + H(+). The catalysed reaction is (3S)-3-hydroxybutanoyl-CoA = (3R)-3-hydroxybutanoyl-CoA. It functions in the pathway lipid metabolism; fatty acid beta-oxidation. In terms of biological role, catalyzes the formation of a hydroxyacyl-CoA by addition of water on enoyl-CoA. Also exhibits 3-hydroxyacyl-CoA epimerase and 3-hydroxyacyl-CoA dehydrogenase activities. This Salmonella typhimurium (strain LT2 / SGSC1412 / ATCC 700720) protein is Fatty acid oxidation complex subunit alpha.